The chain runs to 362 residues: S-adenosylmethionine:tRNA ribosyltransferase-isomerase (362 aa).

Belongs to the QueA family. In terms of assembly, monomer.

It localises to the cytoplasm. It carries out the reaction 7-aminomethyl-7-carbaguanosine(34) in tRNA + S-adenosyl-L-methionine = epoxyqueuosine(34) in tRNA + adenine + L-methionine + 2 H(+). It participates in tRNA modification; tRNA-queuosine biosynthesis. In terms of biological role, transfers and isomerizes the ribose moiety from AdoMet to the 7-aminomethyl group of 7-deazaguanine (preQ1-tRNA) to give epoxyqueuosine (oQ-tRNA). This is S-adenosylmethionine:tRNA ribosyltransferase-isomerase from Yersinia enterocolitica serotype O:8 / biotype 1B (strain NCTC 13174 / 8081).